A 756-amino-acid chain; its full sequence is 3-O-alpha-D-glucosyl-L-rhamnose phosphorylase (756 aa).

358–359 (WD) serves as a coordination point for substrate. The Proton donor role is filled by E486. 590–591 (KQ) contacts substrate.

Belongs to the glycosyl hydrolase 65 family. As to quaternary structure, monomer.

Its subcellular location is the cytoplasm. The catalysed reaction is 3-O-alpha-D-glucosyl-L-rhamnose + phosphate = beta-D-glucose 1-phosphate + L-rhamnopyranose. Phosphorylase showing strict alpha-1,3-regioselectivity and producing 3-O-alpha-D-glucopyranosyl-L-rhamnopyranose. Specific for L-rhamnose as acceptor and beta-D-glucose 1-phosphate as donor. Does not phosphorylate alpha,alpha-trehalose, kojibiose, nigerose, or maltose. The chain is 3-O-alpha-D-glucosyl-L-rhamnose phosphorylase from Lachnoclostridium phytofermentans (strain ATCC 700394 / DSM 18823 / ISDg) (Clostridium phytofermentans).